A 1687-amino-acid chain; its full sequence is Brefeldin A-inhibited guanine nucleotide-exchange protein 1 (1687 aa).

The tract at residues 494–529 is disordered; the sequence is SLENEAPANNHSNSNEEDGTTIDHDFHPDLNPESSD. Positions 514–523 are enriched in basic and acidic residues; the sequence is TIDHDFHPDL. One can recognise an SEC7 domain in the interval 532–719; sequence TLEQRRAYKI…GALYDQVVIN (188 aa). Glu-634 is an active-site residue. A disordered region spans residues 1229–1248; that stretch reads KGRSSSPSTPVTDDHSPSTQ. Residues 1232–1248 are compositionally biased toward polar residues; the sequence is SSSPSTPVTDDHSPSTQ.

In terms of assembly, homodimer.

The protein localises to the cytoplasm. Its subcellular location is the cytosol. The protein resides in the membrane. Inhibited by brefeldin A. In terms of biological role, activates the ARF proteins by exchanging bound GDP for free GTP. Plays a role in vesicular protein sorting. The sequence is that of Brefeldin A-inhibited guanine nucleotide-exchange protein 1 (BIG1) from Arabidopsis thaliana (Mouse-ear cress).